The following is a 950-amino-acid chain: Glycine dehydrogenase (decarboxylating) (950 aa).

The residue at position 698 (K698) is an N6-(pyridoxal phosphate)lysine.

The protein belongs to the GcvP family. As to quaternary structure, the glycine cleavage system is composed of four proteins: P, T, L and H. It depends on pyridoxal 5'-phosphate as a cofactor.

It catalyses the reaction N(6)-[(R)-lipoyl]-L-lysyl-[glycine-cleavage complex H protein] + glycine + H(+) = N(6)-[(R)-S(8)-aminomethyldihydrolipoyl]-L-lysyl-[glycine-cleavage complex H protein] + CO2. The glycine cleavage system catalyzes the degradation of glycine. The P protein binds the alpha-amino group of glycine through its pyridoxal phosphate cofactor; CO(2) is released and the remaining methylamine moiety is then transferred to the lipoamide cofactor of the H protein. This Neisseria meningitidis serogroup C / serotype 2a (strain ATCC 700532 / DSM 15464 / FAM18) protein is Glycine dehydrogenase (decarboxylating).